The chain runs to 901 residues: MLIKLLTKVFGSRNDRTLRRMRKVVNIINAMEPEMEKLSDEELKGKTAEFRVRLEKGEVLENLIPEAFAVVREASKRVFGMRHFDVQLLGGMVLNERCIAEMRTGEGKTLTATLPAYLNALTGKGVHVVTVNDYLAQRDAENNRPLFEFLGLTVGINLPGMPAPAKREAYAADITYGTNNEYGFDYLRDNMAFSPEERVQRKLHYALVDEVDSILIDEARTPLIISGPAEDSSEMYKRVNKIIPHLIRQEKEDSETFQGEGHFSVDEKSRQVNLTERGLVLIEELLVKEGIMDEGESLYSPANIMLMHHVTAALRAHALFTRDVDYIVKDGEVIIVDEHTGRTMQGRRWSDGLHQAVEAKEGVQIQNENQTLASITFQNYFRLYEKLAGMTGTADTEAFEFSSIYKLDTVVVPTNRPMIRKDLPDLVYMTEAEKIQAIIEDIKERTAKGQPVLVGTISIEKSELVSNELTKAGIKHNVLNAKFHANEAAIVAQAGYPAAVTIATNMAGRGTDIVLGGSWQAEVAALENPTAEQIEKIKADWQVRHDAVLAAGGLHIIGTERHESRRIDNQLRGRSGRQGDAGSSRFYLSMEDALMRIFASDRVSGMMRKLGMKPGEAIEHPWVTKAIANAQRKVESRNFDIRKQLLEYDDVANDQRRAIYSQRNELLDVSDVSETINSIREDVFKATIDAYIPPQSLEEMWDIPGLQERLKNDFDLDLPIAEWLDKEPELHEETLRERILAQSIEVYQRKEEVVGAEMMRHFEKGVMLQTLDSLWKEHLAAMDYLRQGIHLRGYAQKDPKQEYKRESFSMFAAMLESLKYEVISTLSKVQVRMPEEVEELEQQRRMEAERLAQMQQLSHQDDDSAAAAALAAQTGERKVGRNDPCPCGSGKKYKQCHGRLQ.

ATP is bound by residues Gln87, 105–109, and Asp512; that span reads GEGKT. The segment at 859–901 is disordered; the sequence is HQDDDSAAAAALAAQTGERKVGRNDPCPCGSGKKYKQCHGRLQ. Positions 885, 887, 896, and 897 each coordinate Zn(2+). The segment covering 891–901 has biased composition (basic residues); that stretch reads KKYKQCHGRLQ.

This sequence belongs to the SecA family. As to quaternary structure, monomer and homodimer. Part of the essential Sec protein translocation apparatus which comprises SecA, SecYEG and auxiliary proteins SecDF-YajC and YidC. Zn(2+) is required as a cofactor.

It is found in the cell inner membrane. The protein localises to the cytoplasm. It carries out the reaction ATP + H2O + cellular proteinSide 1 = ADP + phosphate + cellular proteinSide 2.. Part of the Sec protein translocase complex. Interacts with the SecYEG preprotein conducting channel. Has a central role in coupling the hydrolysis of ATP to the transfer of proteins into and across the cell membrane, serving both as a receptor for the preprotein-SecB complex and as an ATP-driven molecular motor driving the stepwise translocation of polypeptide chains across the membrane. This chain is Protein translocase subunit SecA, found in Escherichia coli O6:K15:H31 (strain 536 / UPEC).